The sequence spans 607 residues: NADH-ubiquinone oxidoreductase chain 5 (607 aa).

The next 16 helical transmembrane spans lie at 3–23 (IFTT…LISM), 35–55 (YTTT…LMFF), 84–104 (FFSI…MQFS), 117–137 (FIKY…ANNM), 140–160 (LFIG…WWYG), 171–191 (AILY…WFSL), 210–230 (LIPL…FGLH), 241–261 (TPVS…FLLV), 272–292 (FILT…AICA), 301–320 (IIAF…LGMN), 324–344 (LAFL…MCSG), 365–385 (IMPF…GMPF), 405–427 (NAWA…MRII), 457–477 (LAFG…PTSI), 482–502 (MPWF…LIAL), and 586–606 (LYFM…SINL).

Belongs to the complex I subunit 5 family. Core subunit of respiratory chain NADH dehydrogenase (Complex I) which is composed of 45 different subunits.

Its subcellular location is the mitochondrion inner membrane. It catalyses the reaction a ubiquinone + NADH + 5 H(+)(in) = a ubiquinol + NAD(+) + 4 H(+)(out). Core subunit of the mitochondrial membrane respiratory chain NADH dehydrogenase (Complex I) which catalyzes electron transfer from NADH through the respiratory chain, using ubiquinone as an electron acceptor. Essential for the catalytic activity and assembly of complex I. The protein is NADH-ubiquinone oxidoreductase chain 5 (Mtnd5) of Mus musculus (Mouse).